We begin with the raw amino-acid sequence, 615 residues long: MAGSVDKPSYELFSKDTRAFVYGMQTKAVQGMLDFDYMCGRTVPSVAAIIYTFGSQSISKLYWGTKEILLPVYRTIEEACTKHPEVDVVVNFASSRSAYASTMELMEFPQIRCIAIIAEGVPERRAREILVTSKEKNVVIIGPATVGGIKPGCFKIGNTGGMMDNIVASKLYRPGSVAYVSKSGGMSNELNNIISHTTDGVYEGIAIGGDRYPGTTFIDHLIRFEADPACKLMVLLGEVGGVEEYRVIEAVKNGTIKKPIVAWAIGTCSSMFKTEVQFGHAGSFANSELETAVAKNQAMREAGIYVPETFEKLPALLQEVYEGLVKKGVIVPQPEVAPPNIPLDYAWAKELGLVRKPSSFICTISNDRGSELTYNNVPISKVFEEELGIGGVISLLWLRRRLPSYATKFLEMVLQLTADHGPCVSGAMNTIITTRAGKDLISSLVAGLLTIGTRFGGALDGAAQEFSKAYDAGLSPRAFVDSCRKANKLIPGIGHRIKSRNNPDLRVELVKGYVKKNFPSTKLLDYALAVENVTTSKKDNLILNVDGCIAVCFVDLLRNCGAFTLEEANEYINLGILNGMFVLGRSIGLIGHHLDQKRLRAPLYRHPWDDFLYLS.

Residues Leu221–Gly241 and Phe272–Ala298 contribute to the ATP site. Residue Glu238 coordinates Mg(2+). His280 serves as the catalytic Tele-phosphohistidine intermediate. Met299–Thr309 serves as a coordination point for CoA. Ser359 is subject to Phosphoserine.

The protein belongs to the succinate/malate CoA ligase alpha subunit family. As to quaternary structure, composed of two subunits.

The protein localises to the cytoplasm. It carries out the reaction oxaloacetate + acetyl-CoA + ADP + phosphate = citrate + ATP + CoA. Catalyzes the formation of cytosolic acetyl-CoA, which is mainly used for the biosynthesis of fatty acids and sterols. This is Probable ATP-citrate synthase subunit 1 from Schizosaccharomyces pombe (strain 972 / ATCC 24843) (Fission yeast).